We begin with the raw amino-acid sequence, 72 residues long: MAKPLGTTGEFFRRRDEWRKHPMLSNQMRHALPGIGIGVGAFCVYLVGEQIYSKLMAPSSQSSHQKQPAPSH.

Residues Ala-31 to Gly-48 form a helical membrane-spanning segment.

It belongs to the complex I NDUFB3 subunit family. As to quaternary structure, complex I is composed of at least 49 different subunits.

It localises to the mitochondrion inner membrane. In terms of biological role, accessory subunit of the mitochondrial membrane respiratory chain NADH dehydrogenase (Complex I), that is believed not to be involved in catalysis. Complex I functions in the transfer of electrons from NADH to the respiratory chain. The immediate electron acceptor for the enzyme is believed to be ubiquinone. The chain is NADH dehydrogenase [ubiquinone] 1 beta subcomplex subunit 3-A from Arabidopsis thaliana (Mouse-ear cress).